The chain runs to 353 residues: Diacetylchitobiose uptake system permease protein NgcF (353 aa).

The segment at 1–24 (MKDTIPTAETASRRPEPAARGGRP) is disordered. The next 6 membrane-spanning stretches (helical) occupy residues 36–56 (FFLA…LIPF), 100–120 (LLAA…AVAI), 141–161 (IISF…WAQM), 197–217 (VMFV…IAAI), 254–274 (AYIY…AMVP), and 303–323 (TAMG…VFLV). Residues 95–320 (LRNVALLAAF…AVTLVFAALV (226 aa)) enclose the ABC transmembrane type-1 domain. The interval 329–353 (GGEGESKRKAPGSRARRAAAKGGAR) is disordered. Basic residues predominate over residues 337 to 353 (KAPGSRARRAAAKGGAR).

This sequence belongs to the binding-protein-dependent transport system permease family. As to quaternary structure, the complex is composed of two ATP-binding proteins (MsiK), two transmembrane proteins (NgcF and NgcG) and a solute-binding protein (NgcE).

Its subcellular location is the cell membrane. In terms of biological role, part of the ABC transporter complex NgcEFG-MsiK involved in N,N'-diacetylchitobiose ((GlcNAc)2) uptake. Responsible for the translocation of the substrate across the membrane. The sequence is that of Diacetylchitobiose uptake system permease protein NgcF from Streptomyces coelicolor (strain ATCC BAA-471 / A3(2) / M145).